A 519-amino-acid chain; its full sequence is ATP synthase subunit beta, mitochondrial (519 aa).

Residues 1–21 (MLTRFRSAVLRGAVSITGARA) constitute a mitochondrion transit peptide. Residues 184–191 (GAGVGKTV) and arginine 216 each bind ATP.

It belongs to the ATPase alpha/beta chains family. F-type ATPases have 2 components, F(1) - the catalytic core - and F(o) - the membrane proton channel. F(1) has five subunits: alpha(3), beta(3), gamma(1), delta(1), epsilon(1), plus the additional subunit P18 (Tb427.05.1710) that is not present in F(1)F(o) ATP synthase from metazoa. Subunit P18 (Tb927.5.1710) interacts with the alpha subunit with a 1:1 stoichiometry; the interaction is direct. Subunit gamma is part of the central stalk. F(o) has three main subunits: a, b and c. The trypanosomal ATPase complex contains additional subunits that are not present in the F(1)F(o) ATP synthase from metazoa.

The protein localises to the mitochondrion. Its subcellular location is the mitochondrion inner membrane. The catalysed reaction is ATP + H2O + 4 H(+)(in) = ADP + phosphate + 5 H(+)(out). In terms of biological role, mitochondrial membrane ATP synthase (F(1)F(o) ATP synthase) produces ATP from ADP in the presence of a proton gradient across the membrane which is generated by electron transport complexes of the respiratory chain. F-type ATPases consist of two structural domains, F(1) - containing the extramembraneous catalytic core, and F(o) - containing the membrane proton channel, linked together by a central stalk and a peripheral stalk. During catalysis, ATP synthesis in the catalytic domain of F(1) is coupled via a rotary mechanism of the central stalk subunits to proton translocation. Subunits alpha and beta form the catalytic core in F(1). Rotation of the central stalk against the surrounding alpha(3)beta(3) subunits leads to hydrolysis of ATP in three separate catalytic sites on the beta subunits. Contrary to the procyclic, insect form that requires F(1)F(o) ATP synthase for ATP synthesis, the bloodstream form relies on ATP hydrolysis by F(1)F(o) ATP synthase to maintain its mitochondrial membrane potential. The protein is ATP synthase subunit beta, mitochondrial of Trypanosoma brucei brucei.